The primary structure comprises 876 residues: Leucine--tRNA ligase (876 aa).

A 'HIGH' region motif is present at residues 43 to 53 (PYPSGRIHMGH). Positions 632 to 636 (KMSKS) match the 'KMSKS' region motif. Lys-635 is an ATP binding site.

This sequence belongs to the class-I aminoacyl-tRNA synthetase family.

It is found in the cytoplasm. It catalyses the reaction tRNA(Leu) + L-leucine + ATP = L-leucyl-tRNA(Leu) + AMP + diphosphate. The polypeptide is Leucine--tRNA ligase (Rhodopseudomonas palustris (strain TIE-1)).